We begin with the raw amino-acid sequence, 118 residues long: UPF0102 protein Lxx14785 (118 aa).

This sequence belongs to the UPF0102 family.

The polypeptide is UPF0102 protein Lxx14785 (Leifsonia xyli subsp. xyli (strain CTCB07)).